The sequence spans 202 residues: Ribosomal RNA small subunit methyltransferase G (202 aa).

S-adenosyl-L-methionine contacts are provided by residues Gly75, Phe80, 125-126 (VQ), and Arg139.

It belongs to the methyltransferase superfamily. RNA methyltransferase RsmG family.

The protein resides in the cytoplasm. Its function is as follows. Specifically methylates the N7 position of a guanine in 16S rRNA. The chain is Ribosomal RNA small subunit methyltransferase G from Mesomycoplasma hyopneumoniae (strain 232) (Mycoplasma hyopneumoniae).